Consider the following 555-residue polypeptide: 2-isopropylmalate synthase (555 aa).

In terms of domain architecture, Pyruvate carboxyltransferase spans P30–N303. D39, H242, H244, and N278 together coordinate Mg(2+). Residues Q437–K555 form a regulatory domain region.

This sequence belongs to the alpha-IPM synthase/homocitrate synthase family. LeuA type 2 subfamily. Homodimer. Mg(2+) serves as cofactor.

It is found in the cytoplasm. It catalyses the reaction 3-methyl-2-oxobutanoate + acetyl-CoA + H2O = (2S)-2-isopropylmalate + CoA + H(+). Its pathway is amino-acid biosynthesis; L-leucine biosynthesis; L-leucine from 3-methyl-2-oxobutanoate: step 1/4. Its function is as follows. Catalyzes the condensation of the acetyl group of acetyl-CoA with 3-methyl-2-oxobutanoate (2-ketoisovalerate) to form 3-carboxy-3-hydroxy-4-methylpentanoate (2-isopropylmalate). This is 2-isopropylmalate synthase from Brucella melitensis biotype 1 (strain ATCC 23456 / CCUG 17765 / NCTC 10094 / 16M).